The sequence spans 494 residues: Ceramide glucosyltransferase (494 aa).

Residues 1–6 (MPLLMD) lie on the Lumenal side of the membrane. Residues 7-27 (GLAYAGAIWSLIVFCVQAIGL) form a helical membrane-spanning segment. The Cytoplasmic segment spans residues 28–337 (YQLFRSYSRP…VRWLRVRKWT (310 aa)). Position 95 (Asp-95) is a short sequence motif, D1. Asp-160 is a short sequence motif (D2). A short sequence motif (D3) is located at residue Asp-285. Asp-285 (proton acceptor) is an active-site residue. A (Q/R)XXRW motif is present at residues 326 to 330 (RRVRW). A helical transmembrane segment spans residues 338–358 (VLLATLVEPGVESMVCCMAFA). At 359–380 (HALTTTPWCPNPADWPIPHTWT) the chain is on the lumenal side. A helical membrane pass occupies residues 381-401 (ALWSIWLAAIAVWATLDYVVY). Residues 402-428 (HFLHSCRSIEKDADSPDFAQGNELMKR) lie on the Cytoplasmic side of the membrane. Residues 429 to 449 (PFGAWILAWIGREILALPIWT) form a helical membrane-spanning segment. Over 450 to 494 (RAVLLGTTVTWRGTKFKVRPDQSVVDIPNAGAKSNGIGSTNRKVR) the chain is Lumenal.

The protein belongs to the glycosyltransferase 2 family.

It localises to the golgi apparatus membrane. It carries out the reaction an N-acylsphing-4-enine + UDP-alpha-D-glucose = a beta-D-glucosyl-(1&lt;-&gt;1')-N-acylsphing-4-enine + UDP + H(+). It participates in lipid metabolism; sphingolipid metabolism. Its function is as follows. Catalyzes the final step in the biosynthesis of the membrane lipid glucosylceramide (GluCer), the transfer of glucose to ceramide. Glucosylceramides play important roles in growth, differentiation and pathogenicity. This is Ceramide glucosyltransferase from Pyricularia oryzae (strain 70-15 / ATCC MYA-4617 / FGSC 8958) (Rice blast fungus).